A 415-amino-acid chain; its full sequence is Putative competence-damage inducible protein (415 aa).

This sequence belongs to the CinA family.

The chain is Putative competence-damage inducible protein from Limosilactobacillus reuteri (strain DSM 20016) (Lactobacillus reuteri).